A 779-amino-acid polypeptide reads, in one-letter code: Potassium/sodium hyperpolarization-activated cyclic nucleotide-gated channel 3 (779 aa).

The disordered stretch occupies residues 1–47 (MEEEARPAAGAGEAATPARETPPAAPAQARAASGGVPESAPEPKRRQ). Topologically, residues 1–96 (MEEEARPAAG…PYSDFRFYWD (96 aa)) are cytoplasmic. The segment covering 7–32 (PAAGAGEAATPARETPPAAPAQARAA) has biased composition (low complexity). The tract at residues 45-90 (RRQLGTLLQPTVNKFSLRVFGSHKAVEIEQERVKSAGAWIIHPYSD) is involved in subunit assembly. A helical transmembrane segment spans residues 97–117 (LIMLLLMVGNLIVLPVGITFF). The Extracellular portion of the chain corresponds to 118–123 (KEENSP). A helical membrane pass occupies residues 124 to 144 (PWIVFNVLSDTFFLLDLVLNF). Residues 145-170 (RTGIVVEEGAEILLAPRAIRTRYLRT) are Cytoplasmic-facing. The chain crosses the membrane as a helical span at residues 171–191 (WFLVDLISSIPVDYIFLVVEL). Over 192 to 200 (EPRLDAEVY) the chain is Extracellular. The chain crosses the membrane as a helical; Voltage-sensor span at residues 201 to 221 (KTARALRIVRFTKILSLLRLL). Over 222–252 (RLSRLIRYIHQWEEIFHMTYDLASAVVRIFN) the chain is Cytoplasmic. A helical transmembrane segment spans residues 253–273 (LIGMMLLLCHWDGCLQFLVPM). Residues 274-296 (LQDFPSDCWVSMNRMVNHSWGRQ) lie on the Extracellular side of the membrane. N290 carries an N-linked (GlcNAc...) asparagine glycan. An intramembrane region (pore-forming) is located at residues 297 to 318 (YSHALFKAMSHMLCIGYGQQAP). The Extracellular segment spans residues 319–328 (VGMPDVWLTM). Residues 329–349 (LSMIVGATCYAMFIGHATALI) traverse the membrane as a helical segment. The Cytoplasmic portion of the chain corresponds to 350–779 (QSLDSSRRQY…PRGPQISANM (430 aa)). Residues 353-779 (DSSRRQYQEK…PRGPQISANM (427 aa)) are interaction with KCTD3. Residues G491, E492, C494, R501, T502, R542, and R545 each coordinate 3',5'-cyclic AMP. Residues 549 to 569 (KNSILQRKRSEPSPGSSGGVM) are disordered. S633 is subject to Phosphoserine. The span at 687–697 (SLSRTGRSQVS) shows a compositional bias: polar residues. The interval 687–779 (SLSRTGRSQV…PRGPQISANM (93 aa)) is disordered.

Belongs to the potassium channel HCN family. In terms of assembly, homotetramer. The potassium channel is composed of a homo- or heterotetrameric complex of pore-forming subunits. Interacts with HCN1. Interacts with KCTD3; this interaction increases cell surface expression and current density of this channel. Interacts with PEX5L. Detected in hypothalamus, amygdala, olfactory bulb, hippocampus and retina (at protein level). Highly expressed in brain and heart, in particular in ventricle, atrium and in sinoatrial node (SAN). Detected at low levels in skeletal muscle and lung. Expressed in DRG neurons.

The protein localises to the cell membrane. The enzyme catalyses K(+)(in) = K(+)(out). The catalysed reaction is Na(+)(in) = Na(+)(out). Unlike HCN2 and HCN4, HCN3 is insensitive to cyclic nucleotides, such as cAMP or cGMP. This lack of sensitivity of HCN3, despite harboring a functional cyclic nucleotide-binding domain (CNBD), may be explained by its shorter C-terminal sequence, which may alter the normal autoinhibition of the channel. Inhibited by Cs(1+) and ivabradine. Phosphatidylinositol-4,5-bisphosphate (PIP(2)) shifts HCN3 activation to more depolarized potentials and accelerated activation kinetics. Hyperpolarization-activated ion channel that are permeable to sodium and potassium ions, with an about 3:1 preference for potassium ions. Contributes to the native pacemaker currents in heart (If) and in neurons (Ih). In particular, plays a pivotal role in maintaining excitability and promoting rhythmic burst firing within hypothalamic nuclei. Exerts a significant influence on the configuration of the cardiac action potential waveform. Does not appear to play a prominent role in the processing of acute, neuropathic, or inflammatory pain. This is Potassium/sodium hyperpolarization-activated cyclic nucleotide-gated channel 3 (Hcn3) from Mus musculus (Mouse).